We begin with the raw amino-acid sequence, 379 residues long: UPF0754 membrane protein ABC1518 (379 aa).

The next 2 helical transmembrane spans lie at 1–21 (MHWI…GAAT) and 358–378 (LLGG…VHFF).

This sequence belongs to the UPF0754 family.

The protein resides in the cell membrane. The protein is UPF0754 membrane protein ABC1518 of Shouchella clausii (strain KSM-K16) (Alkalihalobacillus clausii).